Here is a 414-residue protein sequence, read N- to C-terminus: Gamma-glutamyl phosphate reductase (414 aa).

This sequence belongs to the gamma-glutamyl phosphate reductase family.

The protein localises to the cytoplasm. It carries out the reaction L-glutamate 5-semialdehyde + phosphate + NADP(+) = L-glutamyl 5-phosphate + NADPH + H(+). Its pathway is amino-acid biosynthesis; L-proline biosynthesis; L-glutamate 5-semialdehyde from L-glutamate: step 2/2. Its function is as follows. Catalyzes the NADPH-dependent reduction of L-glutamate 5-phosphate into L-glutamate 5-semialdehyde and phosphate. The product spontaneously undergoes cyclization to form 1-pyrroline-5-carboxylate. The polypeptide is Gamma-glutamyl phosphate reductase (Geobacillus kaustophilus (strain HTA426)).